The chain runs to 105 residues: Replication restart protein PriB (105 aa).

Residues 1-102 form the SSB domain; it reads MTANRLTLSG…LHAEQIELID (102 aa).

This sequence belongs to the PriB family. As to quaternary structure, homodimer. Interacts with PriA and DnaT. Component of the replication restart primosome. Primosome assembly occurs via a 'hand-off' mechanism. PriA binds to replication forks, subsequently PriB then DnaT bind; DnaT then displaces ssDNA to generate the helicase loading substrate.

In terms of biological role, involved in the restart of stalled replication forks, which reloads the replicative helicase on sites other than the origin of replication; the PriA-PriB pathway is the major replication restart pathway. During primosome assembly it facilitates complex formation between PriA and DnaT on DNA; stabilizes PriA on DNA. Stimulates the DNA unwinding activity of PriA helicase. The protein is Replication restart protein PriB of Erwinia tasmaniensis (strain DSM 17950 / CFBP 7177 / CIP 109463 / NCPPB 4357 / Et1/99).